The chain runs to 191 residues: Ribonuclease M5 1 (191 aa).

Residues 10 to 93 (KEVIVVEGKD…AFLTKHDAAP (84 aa)) enclose the Toprim domain. The Mg(2+) site is built by Glu16, Asp62, and Asp64.

Belongs to the ribonuclease M5 family. It depends on Mg(2+) as a cofactor.

The protein resides in the cytoplasm. The enzyme catalyses Endonucleolytic cleavage of RNA, removing 21 and 42 nucleotides, respectively, from the 5'- and 3'-termini of a 5S-rRNA precursor.. Functionally, required for correct processing of both the 5' and 3' ends of 5S rRNA precursor. Cleaves both sides of a double-stranded region yielding mature 5S rRNA in one step. This chain is Ribonuclease M5 1, found in Ligilactobacillus salivarius (strain CECT 5713) (Lactobacillus salivarius).